The chain runs to 246 residues: Probable transcriptional regulatory protein GK2594 (246 aa).

Belongs to the TACO1 family.

The protein resides in the cytoplasm. The protein is Probable transcriptional regulatory protein GK2594 of Geobacillus kaustophilus (strain HTA426).